Consider the following 713-residue polypeptide: Methionine--tRNA ligase (713 aa).

The 'HIGH' region signature appears at 17–27 (PYANGPIHIGH). 4 residues coordinate Zn(2+): Cys-149, Cys-152, Cys-162, and Cys-165. The 'KMSKS' region signature appears at 345–349 (KLSTS). Thr-348 lines the ATP pocket. The tract at residues 530–564 (VRTSTPDDDPAGAVGWEDAGAPLLPAGHPIPSGPD) is disordered. Residues 614-713 (DFTQLDLRAG…TEAEDGSVVR (100 aa)) form the tRNA-binding domain.

The protein belongs to the class-I aminoacyl-tRNA synthetase family. MetG type 1 subfamily. Homodimer. Zn(2+) is required as a cofactor.

It is found in the cytoplasm. The catalysed reaction is tRNA(Met) + L-methionine + ATP = L-methionyl-tRNA(Met) + AMP + diphosphate. Functionally, is required not only for elongation of protein synthesis but also for the initiation of all mRNA translation through initiator tRNA(fMet) aminoacylation. The protein is Methionine--tRNA ligase of Salinibacter ruber (strain DSM 13855 / M31).